The primary structure comprises 201 residues: Cysteine dioxygenase type 1 (201 aa).

Fe cation-binding residues include H86, H88, and H141. Residues 93 to 158 constitute a cross-link (3'-(S-cysteinyl)-tyrosine (Cys-Tyr)); it reads CFLKLLQGQL…TEPAVSLHLY (66 aa).

The protein belongs to the cysteine dioxygenase family. In terms of assembly, monomer. Fe cation serves as cofactor. It depends on Ni(2+) as a cofactor. The cofactor is Zn(2+). The thioether cross-link between Cys-93 and Tyr-158 plays a structural role through stabilizing the Fe(2+) ion, and prevents the production of highly damaging free hydroxyl radicals by holding the oxygen radical via hydroxyl hydrogen.

The enzyme catalyses L-cysteine + O2 = 3-sulfino-L-alanine + H(+). It participates in organosulfur biosynthesis; taurine biosynthesis; hypotaurine from L-cysteine: step 1/2. Its function is as follows. Catalyzes the oxidation of cysteine to cysteine sulfinic acid with addition of molecular dioxygen. The sequence is that of Cysteine dioxygenase type 1 (cdo1) from Danio rerio (Zebrafish).